The primary structure comprises 534 residues: Serine protease vicPa (534 aa).

Positions methionine 1–glycine 17 are cleaved as a signal peptide. Residues asparagine 65 and asparagine 126 are each glycosylated (N-linked (GlcNAc...) asparagine). Serine 174 acts as the Charge relay system in catalysis. Asparagine 297, asparagine 416, and asparagine 436 each carry an N-linked (GlcNAc...) asparagine glycan. The active-site Charge relay system is the aspartate 450.

This sequence belongs to the peptidase S28 family.

Its pathway is mycotoxin biosynthesis. Serine protease, part of the gene cluster that mediates the biosynthesis of the secondary metabolite victorin, the molecular basis for Victoria blight of oats. Within the pathway, vicPa and vicPb are probably involved in the processing of the vicA1 and vicA2 precursors. The pathway starts with the processing of the precursor vicA1 by several endopeptidases including kexin proteases as well as the cluster-specific S28 family peptidases vicPa and vicPb to produce 7 identical copies of the hexapeptide Gly-Leu-Lys-Leu-Ala-Phe. After being excised from the precursor peptide, the core peptides are cyclized and modified post-translationally by enzymes encoded within the gene cluster. The ustYa family oxidase vicYb is required for the formation of the macrocycle in victorin and the copper amine oxidases (CAOs) vicK1 and vicK2 are responsible for converting victorin to the active form by oxidizing the N-terminal glycyl residue in the peptides to glyoxylate. Relaxed substrate specificity of enzymes in the victorin biosynthetic pathway results in a metabolic grid that produces a set of analogs including victorinines B, C, E or HV-toxin M. This chain is Serine protease vicPa, found in Bipolaris victoriae (strain FI3) (Victoria blight of oats agent).